An 80-amino-acid polypeptide reads, in one-letter code: RNA-binding protein KhpA (80 aa).

The 48-residue stretch at 33–80 (LEILQLRVASEDVGKVIGKHGRIARALRTLLSASAHASQTRYALEIID) folds into the KH domain.

The protein belongs to the KhpA RNA-binding protein family. Forms a complex with KhpB.

It is found in the cytoplasm. A probable RNA chaperone. Forms a complex with KhpB which binds to cellular RNA and controls its expression. Plays a role in peptidoglycan (PG) homeostasis and cell length regulation. This is RNA-binding protein KhpA from Treponema pallidum (strain Nichols).